The primary structure comprises 522 residues: Polyprenol-phosphate-mannose--protein mannosyltransferase (522 aa).

The Cytoplasmic segment spans residues 1–42 (MTARPPESCVLAKDRPEEPVVPVVSPGPLVPVADFGPLDRLR). Residues 43-63 (GWIVTGLITLLATVTRFLNLG) form a helical membrane-spanning segment. Residues 64–119 (SLTDAGTPIFDEKHYAPQAWQVLNNHGVEDNPGYGLVVHPPVGKQLIAIGEAIFGY) lie on the Extracellular side of the membrane. The helical transmembrane segment at 120 to 140 (NGFGWRFTGALLGVVLVALVV) threads the bilayer. The Cytoplasmic portion of the chain corresponds to 141–149 (RIVRRISRS). A helical transmembrane segment spans residues 150–170 (TLVGAIAGVLLICDGVSFVTA). A topological domain (extracellular) is located at residue R171. Residues 172-192 (TALLDGFLTFFVVAAFGALIV) form a helical membrane-spanning segment. Topologically, residues 193–239 (DRDQVRERMHIALLAGRSAATVWGPRVGVRWWRFGAGVLLGLACATK) are cytoplasmic. Residues 240 to 260 (WSGVYFVLFFGAMALAFDVAA) traverse the membrane as a helical segment. Topologically, residues 261–281 (RRQYQVQRPWLGTVRRDVLPS) are extracellular. A helical transmembrane segment spans residues 282-302 (GYALGLIPFAVYLATYAPWFA). Over 303–390 (SETAIDRHAV…CGAQSCVKAE (88 aa)) the chain is Cytoplasmic. A helical transmembrane segment spans residues 391-411 (MLVGTPAMWWLAVPVLAYAGW). The Extracellular segment spans residues 412–418 (RMFVRRD). The chain crosses the membrane as a helical span at residues 419 to 439 (WRYAVVLVGYCAGWLPWFADI). The Cytoplasmic segment spans residues 440-442 (DRQ). A helical membrane pass occupies residues 443 to 463 (MYFFYAATMAPFLVMGISLVL). The Extracellular segment spans residues 464–478 (GDILYHPGQGSERRT). A helical transmembrane segment spans residues 479–499 (LGLIVVCCYVALVVTNFAWLY). Over 500–522 (PVLTGLPISQQTWNLEIWLPSWR) the chain is Cytoplasmic.

It belongs to the glycosyltransferase 39 family.

It localises to the cell membrane. It functions in the pathway protein modification; protein glycosylation. Functionally, protein O-mannosyltransferase that catalyzes the transfer of a single mannose residue from a polyprenol phospho-mannosyl lipidic donor to the hydroxyl group of selected serine and threonine residues in acceptor proteins. This is Polyprenol-phosphate-mannose--protein mannosyltransferase (pmt) from Mycobacterium tuberculosis (strain CDC 1551 / Oshkosh).